Here is a 156-residue protein sequence, read N- to C-terminus: 6,7-dimethyl-8-ribityllumazine synthase (156 aa).

Residues Phe-22, 57–59, and 81–83 each bind 5-amino-6-(D-ribitylamino)uracil; these read AVE and SVI. 86 to 87 serves as a coordination point for (2S)-2-hydroxy-3-oxobutyl phosphate; the sequence is GT. The active-site Proton donor is the His-89. Phe-114 lines the 5-amino-6-(D-ribitylamino)uracil pocket. Arg-128 contributes to the (2S)-2-hydroxy-3-oxobutyl phosphate binding site.

This sequence belongs to the DMRL synthase family. As to quaternary structure, forms an icosahedral capsid composed of 60 subunits, arranged as a dodecamer of pentamers.

It catalyses the reaction (2S)-2-hydroxy-3-oxobutyl phosphate + 5-amino-6-(D-ribitylamino)uracil = 6,7-dimethyl-8-(1-D-ribityl)lumazine + phosphate + 2 H2O + H(+). It functions in the pathway cofactor biosynthesis; riboflavin biosynthesis; riboflavin from 2-hydroxy-3-oxobutyl phosphate and 5-amino-6-(D-ribitylamino)uracil: step 1/2. In terms of biological role, catalyzes the formation of 6,7-dimethyl-8-ribityllumazine by condensation of 5-amino-6-(D-ribitylamino)uracil with 3,4-dihydroxy-2-butanone 4-phosphate. This is the penultimate step in the biosynthesis of riboflavin. This is 6,7-dimethyl-8-ribityllumazine synthase from Aliivibrio salmonicida (strain LFI1238) (Vibrio salmonicida (strain LFI1238)).